The following is a 56-amino-acid chain: MVNLNKINSNSISNSIGNISSGNINNSIGNSSSSGCDDVFNNSTNNNNNNNNNNNK.

The disordered stretch occupies residues 15–56 (SIGNISSGNINNSIGNSSSSGCDDVFNNSTNNNNNNNNNNNK).

This is an uncharacterized protein from Dictyostelium discoideum (Social amoeba).